The primary structure comprises 38 residues: MGYINVFAFPFTIYSLLLCRMNSRNYIAQVDVVNFNLT.

As to quaternary structure, binds host ZYG11B. This would not play any role in SARS-CoV-2 infection.

The protein is Putative ORF10 protein of Severe acute respiratory syndrome coronavirus 2 (2019-nCoV).